The primary structure comprises 375 residues: Beta sliding clamp (375 aa).

This sequence belongs to the beta sliding clamp family. In terms of assembly, forms a ring-shaped head-to-tail homodimer around DNA which binds and tethers DNA polymerases and other proteins to the DNA. The DNA replisome complex has a single clamp-loading complex (3 tau and 1 each of delta, delta', psi and chi subunits) which binds 3 Pol III cores (1 core on the leading strand and 2 on the lagging strand) each with a beta sliding clamp dimer. Additional proteins in the replisome are other copies of gamma, psi and chi, Ssb, DNA helicase and RNA primase.

It is found in the cytoplasm. Functionally, confers DNA tethering and processivity to DNA polymerases and other proteins. Acts as a clamp, forming a ring around DNA (a reaction catalyzed by the clamp-loading complex) which diffuses in an ATP-independent manner freely and bidirectionally along dsDNA. Initially characterized for its ability to contact the catalytic subunit of DNA polymerase III (Pol III), a complex, multichain enzyme responsible for most of the replicative synthesis in bacteria; Pol III exhibits 3'-5' exonuclease proofreading activity. The beta chain is required for initiation of replication as well as for processivity of DNA replication. The polypeptide is Beta sliding clamp (dnaN) (Mycoplasma capricolum subsp. capricolum (strain California kid / ATCC 27343 / NCTC 10154)).